Here is a 535-residue protein sequence, read N- to C-terminus: Probable histone-arginine methyltransferase 1.3 (535 aa).

Position 1 is an N-acetylmethionine (Met-1). The 316-residue stretch at 141 to 456 (EASSAKMYFH…QSYTIDLTLS (316 aa)) folds into the SAM-dependent MTase PRMT-type domain. Positions 158, 167, 191, 213, and 243 each coordinate S-adenosyl-L-methionine. Residues Glu-257 and Glu-266 contribute to the active site. Ser-271 contacts S-adenosyl-L-methionine. Residues 494 to 517 (VAQEPPLQPQPELSTQQDIQTPND) are disordered. Positions 507–516 (STQQDIQTPN) are enriched in polar residues.

Belongs to the class I-like SAM-binding methyltransferase superfamily. Protein arginine N-methyltransferase family. As to quaternary structure, interacts with PQT3 in the nucleus. Post-translationally, ubiquitinated by PQT3.

It localises to the nucleus. It is found in the cytoplasm. It catalyses the reaction L-arginyl-[protein] + 2 S-adenosyl-L-methionine = N(omega),N(omega)-dimethyl-L-arginyl-[protein] + 2 S-adenosyl-L-homocysteine + 2 H(+). Its function is as follows. Methylates (mono- and asymmetric dimethylation) the guanidino nitrogens of arginyl residues in several proteins involved in DNA packaging, transcription regulation, and mRNA stability. Recruited to promoters upon gene activation, methylates histone H3 and activates transcription via chromatin remodeling. Positive regulator in the oxidative stress tolerance that promotes the expression of enzymes preventing oxidative stress such as APX1 and GPX1 by histone methylation (H3R17me2a). Confers tolerance to cadmium CdCl(2) and salt NaCl stresses. The sequence is that of Probable histone-arginine methyltransferase 1.3 (PRMT13) from Arabidopsis thaliana (Mouse-ear cress).